The sequence spans 601 residues: Elongation factor 4 (601 aa).

One can recognise a tr-type G domain in the interval 5–188; the sequence is SHIRNFAIIA…ALVLRLPPPT (184 aa). Residues 17–22 and 135–138 contribute to the GTP site; these read DHGKST and NKID.

This sequence belongs to the TRAFAC class translation factor GTPase superfamily. Classic translation factor GTPase family. LepA subfamily.

The protein localises to the cell inner membrane. The enzyme catalyses GTP + H2O = GDP + phosphate + H(+). Required for accurate and efficient protein synthesis under certain stress conditions. May act as a fidelity factor of the translation reaction, by catalyzing a one-codon backward translocation of tRNAs on improperly translocated ribosomes. Back-translocation proceeds from a post-translocation (POST) complex to a pre-translocation (PRE) complex, thus giving elongation factor G a second chance to translocate the tRNAs correctly. Binds to ribosomes in a GTP-dependent manner. This chain is Elongation factor 4, found in Rhodospirillum rubrum (strain ATCC 11170 / ATH 1.1.1 / DSM 467 / LMG 4362 / NCIMB 8255 / S1).